A 146-amino-acid chain; its full sequence is MRSQFKDEHPFEKRQAEAARIAQRFKDRVPVICEKVENSDIPEIDKRKYLVPVDLTVGQFVYVIRKRIKLPSEKAIFIFVNDILPPTAALISTIYEEHKDDDGFLYVLYSGENTFGEQNEKEDGKVKKIPIDISELDFSCINEPGV.

A lipid anchor (Phosphatidylethanolamine amidated glycine) is attached at Gly-116. The propeptide at 117–146 (EQNEKEDGKVKKIPIDISELDFSCINEPGV) is removed in mature form.

This sequence belongs to the ATG8 family. In terms of processing, the C-terminal 30 residues are removed by ATG4 to expose Gly-116 at the C-terminus. The c-terminal Gly is then amidated with phosphatidylethanolamine by an activating system similar to that for ubiquitin.

The protein resides in the cytoplasmic vesicle. It is found in the autophagosome membrane. It localises to the vacuole membrane. Ubiquitin-like modifier involved in autophagosome formation. With ATG4, mediates the delivery of the autophagosomes to the vacuole via the microtubule cytoskeleton. Required for selective autophagic degradation of the nucleus (nucleophagy) as well as for mitophagy which contributes to regulate mitochondrial quantity and quality by eliminating the mitochondria to a basal level to fulfill cellular energy requirements and preventing excess ROS production. Participates also in membrane fusion events that take place in the early secretory pathway. Also involved in endoplasmic reticulum-specific autophagic process and is essential for the survival of cells subjected to severe ER stress. The ATG8-PE conjugate mediates tethering between adjacent membranes and stimulates membrane hemifusion, leading to expansion of the autophagosomal membrane during autophagy. The chain is Autophagy-related protein 8 (ATG8) from Lodderomyces elongisporus (strain ATCC 11503 / CBS 2605 / JCM 1781 / NBRC 1676 / NRRL YB-4239) (Yeast).